The sequence spans 93 residues: Acylphosphatase (93 aa).

In terms of domain architecture, Acylphosphatase-like spans 6 to 93 (RAHILVSGEV…GDLGPFSVRH (88 aa)). Active-site residues include arginine 21 and asparagine 39.

It belongs to the acylphosphatase family.

The catalysed reaction is an acyl phosphate + H2O = a carboxylate + phosphate + H(+). This is Acylphosphatase (acyP) from Anaeromyxobacter sp. (strain Fw109-5).